Here is a 350-residue protein sequence, read N- to C-terminus: Transcription factor MYB102 (350 aa).

HTH myb-type domains lie at 9–65 (KNGL…RPDI) and 66–116 (KRGR…RKKL). 2 DNA-binding regions (H-T-H motif) span residues 37 to 61 (WRTLPKNAGLQRCGKSCRLRWTNYL) and 89 to 112 (WSAIAARLPGRTDNEIKNFWNTHI).

As to expression, expressed in rosette leaves, cauline leaves and flowers.

The protein resides in the nucleus. Functionally, probable transcription factor that may function in osmotic stress and wounding signaling pathways. Contributes to basal resistance against the herbivore Pieris rapae (white cabbage butterfly) feeding. The sequence is that of Transcription factor MYB102 from Arabidopsis thaliana (Mouse-ear cress).